We begin with the raw amino-acid sequence, 283 residues long: ATP phosphoribosyltransferase (283 aa).

The protein belongs to the ATP phosphoribosyltransferase family. Long subfamily. Mg(2+) serves as cofactor.

It is found in the cytoplasm. It catalyses the reaction 1-(5-phospho-beta-D-ribosyl)-ATP + diphosphate = 5-phospho-alpha-D-ribose 1-diphosphate + ATP. The protein operates within amino-acid biosynthesis; L-histidine biosynthesis; L-histidine from 5-phospho-alpha-D-ribose 1-diphosphate: step 1/9. With respect to regulation, feedback inhibited by histidine. Functionally, catalyzes the condensation of ATP and 5-phosphoribose 1-diphosphate to form N'-(5'-phosphoribosyl)-ATP (PR-ATP). Has a crucial role in the pathway because the rate of histidine biosynthesis seems to be controlled primarily by regulation of HisG enzymatic activity. This Parabacteroides distasonis (strain ATCC 8503 / DSM 20701 / CIP 104284 / JCM 5825 / NCTC 11152) protein is ATP phosphoribosyltransferase.